The sequence spans 190 residues: Endo-1,4-beta-xylanase (190 aa).

Residues 1-190 (QTIGPGTGYS…SSGSASITVS (190 aa)) enclose the GH11 domain. Residue E86 is the Nucleophile of the active site. Residue E177 is the Proton donor of the active site.

The protein belongs to the glycosyl hydrolase 11 (cellulase G) family.

The enzyme catalyses Endohydrolysis of (1-&gt;4)-beta-D-xylosidic linkages in xylans.. Its pathway is glycan degradation; xylan degradation. The polypeptide is Endo-1,4-beta-xylanase (Trichoderma harzianum (Hypocrea lixii)).